An 82-amino-acid chain; its full sequence is CLAVATA3/ESR (CLE)-related protein 53 (82 aa).

The signal sequence occupies residues 1–26; the sequence is MATSTNSREFLIFICVLTLLVVRSEA. 2 positions are modified to hydroxyproline: Pro74 and Pro77. Pro77 carries O-linked (Ara...) hydroxyproline glycosylation.

The protein belongs to the CLV3/ESR signal peptide family. Post-translationally, the O-glycosylation (arabinosylation) of the hydroxyproline Pro-77 enhances binding affinity of the CLE53p peptide for its receptor. In terms of tissue distribution, expressed in root vasculature.

Its subcellular location is the secreted. The protein localises to the extracellular space. Functionally, signaling peptide involved in the regulation of root colonization by arbuscular mycorrhizal (AM) fungi. Moves from root to shoot to function with the receptor kinase SUNN, in a signaling pathway that repress strigolactone biosynthetic genes and strigolactone content in the roots, and consequently reduces the promotion of further colonization by AM fungi. The polypeptide is CLAVATA3/ESR (CLE)-related protein 53 (Medicago truncatula (Barrel medic)).